The primary structure comprises 249 residues: Uridylate kinase (249 aa).

K13–G16 is an ATP binding site. G55 contributes to the UMP binding site. G56 and R60 together coordinate ATP. UMP is bound by residues D75 and I136–T143. ATP is bound by residues T163, F169, and D172.

It belongs to the UMP kinase family. As to quaternary structure, homohexamer.

The protein resides in the cytoplasm. The catalysed reaction is UMP + ATP = UDP + ADP. It functions in the pathway pyrimidine metabolism; CTP biosynthesis via de novo pathway; UDP from UMP (UMPK route): step 1/1. Its activity is regulated as follows. Inhibited by UTP. Functionally, catalyzes the reversible phosphorylation of UMP to UDP. The protein is Uridylate kinase of Baumannia cicadellinicola subsp. Homalodisca coagulata.